Consider the following 557-residue polypeptide: Dihydroxy-acid dehydratase (557 aa).

Asp78 contributes to the Mg(2+) binding site. Cys119 provides a ligand contact to [2Fe-2S] cluster. Positions 120 and 121 each coordinate Mg(2+). Lys121 is modified (N6-carboxylysine). Cys192 contacts [2Fe-2S] cluster. Glu442 contributes to the Mg(2+) binding site. Residue Ser468 is the Proton acceptor of the active site.

The protein belongs to the IlvD/Edd family. As to quaternary structure, homodimer. [2Fe-2S] cluster serves as cofactor. The cofactor is Mg(2+).

The enzyme catalyses (2R)-2,3-dihydroxy-3-methylbutanoate = 3-methyl-2-oxobutanoate + H2O. It catalyses the reaction (2R,3R)-2,3-dihydroxy-3-methylpentanoate = (S)-3-methyl-2-oxopentanoate + H2O. The protein operates within amino-acid biosynthesis; L-isoleucine biosynthesis; L-isoleucine from 2-oxobutanoate: step 3/4. It participates in amino-acid biosynthesis; L-valine biosynthesis; L-valine from pyruvate: step 3/4. Its function is as follows. Functions in the biosynthesis of branched-chain amino acids. Catalyzes the dehydration of (2R,3R)-2,3-dihydroxy-3-methylpentanoate (2,3-dihydroxy-3-methylvalerate) into 2-oxo-3-methylpentanoate (2-oxo-3-methylvalerate) and of (2R)-2,3-dihydroxy-3-methylbutanoate (2,3-dihydroxyisovalerate) into 2-oxo-3-methylbutanoate (2-oxoisovalerate), the penultimate precursor to L-isoleucine and L-valine, respectively. This Bacillus cereus (strain AH187) protein is Dihydroxy-acid dehydratase.